A 586-amino-acid polypeptide reads, in one-letter code: MGGKAQFIRDFILKGPVRRTVPIEPVEPSTSGSIAWTSSESGSAHSSRVSSSPITPRKSAETEETLPTCLVRARGSSSAHSCSAATTSQQSNRQSKEHRIGGIKKEEKPIEMGGGSSENGGANGCSNGDNHHVLLMEKQEKIEPKVFRKRWVILVIFMFLSGSNGAQWIQYSIIANIISDYYKVSFQAVDWTSMIYMLTYILFFIPAAWLLDKWGLRLSVLLGALGNCVGAWIKLLSTHPDSFWVTFVGQTIVGASQMFTLGIPPRLAAVWFGPDEVSRACALGVFGNQLGIAVGFVLPPLIVSNGSVEHVTYDLNTLFLGSAVLNTSILALVICFFTARPAVPPSLAQVNALEEKTFDNNFWGTLRKLMTSRDFVILFITYGINTGVFYAISTLLSQMVLSVYPNETETVGYVGLLIVVAGMAGSVVGGFILDKFKKFKLTTIMIYLFSFVGMLSFTLTIDLDSMVLVFINAALLGFFMTGYLPIGFEFAAEITYPAAEGTTSGLLNASAQIFGIALTWLMGIVMHGFGTFTSNIIMSSCLVVGTILTCFIREDLKRQKAHSVQCTIPTSETQLTSCTLQQNEHF.

2 disordered regions span residues 17–64 and 80–123; these read VRRT…ETEE and HSCS…GGAN. The segment covering 28-37 has biased composition (polar residues); it reads PSTSGSIAWT. Low complexity-rich tracts occupy residues 38-52 and 80-91; these read SSES…VSSS and HSCSAATTSQQS. Over residues 94–110 the composition is skewed to basic and acidic residues; sequence QSKEHRIGGIKKEEKPI. Residues 112 to 123 are compositionally biased toward gly residues; the sequence is MGGGSSENGGAN. A run of 12 helical transmembrane segments spans residues 151–171, 191–211, 218–238, 243–263, 283–303, 317–337, 375–395, 413–433, 441–461, 466–486, 513–533, and 536–556; these read WVIL…WIQY, WTSM…AWLL, LSVL…LLST, FWVT…TLGI, LGVF…PLIV, TLFL…ICFF, FVIL…ISTL, YVGL…GFIL, LTTI…TLTI, MVLV…YLPI, IFGI…GTFT, and IIMS…REDL.

The protein belongs to the major facilitator superfamily. Feline leukemia virus subgroup C receptor (TC 2.A.1.28.1) family.

It localises to the membrane. This is an uncharacterized protein from Caenorhabditis elegans.